We begin with the raw amino-acid sequence, 279 residues long: Ribonuclease T2 protein rnst-2 (279 aa).

The first 17 residues, 1 to 17, serve as a signal peptide directing secretion; it reads MKLLLLLCISCIPLAYS. An intrachain disulfide couples C37 to C48. H60 is a catalytic residue. Residue N68 is glycosylated (N-linked (GlcNAc...) asparagine). Active-site residues include E114 and H118. An intrachain disulfide couples C200 to C210.

This sequence belongs to the RNase T2 family. Expressed in the pharynx, hypodermis, muscle cells, sheath cells, intestinal cells, the vulva and tail regions.

It is found in the lysosome. The catalysed reaction is a ribonucleotidyl-ribonucleotide-RNA + H2O = a 3'-end 3'-phospho-ribonucleotide-RNA + a 5'-end dephospho-ribonucleoside-RNA + H(+). In terms of biological role, probable endoribonuclease involved in the autophagy-mediated degradation of ribosomal RNA and ribosomal proteins in lysosomes. This chain is Ribonuclease T2 protein rnst-2, found in Caenorhabditis elegans.